A 276-amino-acid polypeptide reads, in one-letter code: Undecaprenyl-diphosphatase 1 (276 aa).

A run of 7 helical transmembrane segments spans residues 4 to 24 (ILIC…FLPV), 46 to 63 (TFDV…CWEY), 83 to 103 (FTLN…LFEK), 108 to 128 (VLFS…IILW), 187 to 207 (VATE…TLYE), 217 to 237 (VDSL…AFVC), and 252 to 272 (VFAW…YSGW).

It belongs to the UppP family.

The protein localises to the cell inner membrane. The catalysed reaction is di-trans,octa-cis-undecaprenyl diphosphate + H2O = di-trans,octa-cis-undecaprenyl phosphate + phosphate + H(+). In terms of biological role, catalyzes the dephosphorylation of undecaprenyl diphosphate (UPP). Confers resistance to bacitracin. The sequence is that of Undecaprenyl-diphosphatase 1 from Burkholderia lata (strain ATCC 17760 / DSM 23089 / LMG 22485 / NCIMB 9086 / R18194 / 383).